A 114-amino-acid polypeptide reads, in one-letter code: Ig kappa chain V region AH80-5 (114 aa).

The interval 1 to 22 (IVMTQTPSSKSVPVGDTVTINC) is framework-1. The complementarity-determining-1 stretch occupies residues 23-35 (QAAQSVYSNNRLS). Positions 36 to 50 (WFQQKPGQPPKGLIY) are framework-2. A complementarity-determining-2 region spans residues 51–57 (YASTLAS). The interval 58–93 (GVQQDPSRFKGSGSGTQFTLTISDVQCBBAATVYYC) is framework-3. The tract at residues 94-103 (QGYKSSDTRA) is complementarity-determining-3. Residues 104–113 (FGGGTEVVVK) form a framework-4 region.

The sequence is that of Ig kappa chain V region AH80-5 from Oryctolagus cuniculus (Rabbit).